Consider the following 86-residue polypeptide: MAVRIRLKRFGAKKRPFYRIVVADSRSPRDGRFIDEIGYYNPIAQPAEIKIDVEKAKKWLSVGAQPSDTVKSLFKKEGIIGNSASQ.

Belongs to the bacterial ribosomal protein bS16 family.

The polypeptide is Small ribosomal subunit protein bS16 (Thermoanaerobacter pseudethanolicus (strain ATCC 33223 / 39E) (Clostridium thermohydrosulfuricum)).